A 203-amino-acid chain; its full sequence is Recombination protein RecR (203 aa).

The C4-type zinc finger occupies 56–71 (CAVCGNVSDDERCRIC). In terms of domain architecture, Toprim spans 79–179 (SVVCVVEEPK…TVTRIASGLP (101 aa)).

Belongs to the RecR family.

Its function is as follows. May play a role in DNA repair. It seems to be involved in an RecBC-independent recombinational process of DNA repair. It may act with RecF and RecO. The protein is Recombination protein RecR of Mycobacterium avium (strain 104).